A 177-amino-acid chain; its full sequence is Nucleoside triphosphate/diphosphate phosphatase (177 aa).

The Proton donor role is filled by Arg23. Residues Asn87, Asp103, Asp105, Asp107, Asp120, and Glu123 each contribute to the Mg(2+) site.

It belongs to the Ntdp family. Requires Mg(2+) as cofactor.

It carries out the reaction a ribonucleoside 5'-triphosphate + H2O = a ribonucleoside 5'-diphosphate + phosphate + H(+). It catalyses the reaction a ribonucleoside 5'-diphosphate + H2O = a ribonucleoside 5'-phosphate + phosphate + H(+). Functionally, has nucleoside phosphatase activity towards nucleoside triphosphates and nucleoside diphosphates. The chain is Nucleoside triphosphate/diphosphate phosphatase from Streptococcus sanguinis (strain SK36).